The chain runs to 239 residues: Ribonuclease PH (239 aa).

Phosphate is bound by residues arginine 87 and 125-127; that span reads GTR.

This sequence belongs to the RNase PH family. As to quaternary structure, homohexameric ring arranged as a trimer of dimers.

It carries out the reaction tRNA(n+1) + phosphate = tRNA(n) + a ribonucleoside 5'-diphosphate. In terms of biological role, phosphorolytic 3'-5' exoribonuclease that plays an important role in tRNA 3'-end maturation. Removes nucleotide residues following the 3'-CCA terminus of tRNAs; can also add nucleotides to the ends of RNA molecules by using nucleoside diphosphates as substrates, but this may not be physiologically important. Probably plays a role in initiation of 16S rRNA degradation (leading to ribosome degradation) during starvation. The chain is Ribonuclease PH from Syntrophomonas wolfei subsp. wolfei (strain DSM 2245B / Goettingen).